Here is a 553-residue protein sequence, read N- to C-terminus: ATP synthase F(1) complex subunit alpha, mitochondrial (553 aa).

The transit peptide at 1–43 (MLSVRVAAAVARALPRRAGLVSKNALGSSFIAARNLHASNSRL) directs the protein to the mitochondrion. Q44 carries the post-translational modification Pyrrolidone carboxylic acid. Phosphoserine occurs at positions 53 and 65. Residue S76 is modified to Phosphoserine; alternate. A glycan (O-linked (GlcNAc) serine; alternate) is linked at S76. S106 is modified (phosphoserine). N6-acetyllysine is present on residues K123, K126, and K132. At T134 the chain carries Phosphothreonine. K161 carries the post-translational modification N6-acetyllysine; alternate. The residue at position 161 (K161) is an N6-succinyllysine; alternate. S166 is modified (phosphoserine). K167 is subject to N6-acetyllysine; alternate. K167 bears the N6-succinyllysine; alternate mark. Phosphoserine is present on S184. At R204 the chain carries Omega-N-methylarginine. ATP-binding residues include Q215, G217, K218, T219, and S220. T219 lines the Mg(2+) pocket. Residues K230 and K239 each carry the N6-acetyllysine; alternate modification. N6-succinyllysine; alternate occurs at positions 230 and 239. K240 carries the post-translational modification N6-acetyllysine. Residues K261 and K305 each carry the N6-acetyllysine; alternate modification. 2 positions are modified to N6-succinyllysine; alternate: K261 and K305. D312 is a Mg(2+) binding site. K427 is subject to N6-acetyllysine; alternate. K427 is subject to N6-succinyllysine; alternate. The residue at position 434 (K434) is an N6-acetyllysine. ATP-binding residues include Q473 and Q475. N6-acetyllysine; alternate occurs at positions 498, 506, 531, and 539. K498, K506, K531, and K539 each carry N6-succinyllysine; alternate. The residue at position 541 (K541) is an N6-acetyllysine.

The protein belongs to the ATPase alpha/beta chains family. Homotrimer. Component of the ATP synthase complex composed at least of ATP5F1A/subunit alpha, ATP5F1B/subunit beta, ATP5MC1/subunit c (homooctomer), MT-ATP6/subunit a, MT-ATP8/subunit 8, ATP5ME/subunit e, ATP5MF/subunit f, ATP5MG/subunit g, ATP5MK/subunit k, ATP5MJ/subunit j, ATP5F1C/subunit gamma, ATP5F1D/subunit delta, ATP5F1E/subunit epsilon, ATP5PF/subunit F6, ATP5PB/subunit b, ATP5PD/subunit d, ATP5PO/subunit OSCP. ATP synthase complex consists of a soluble F(1) head domain (subunits alpha(3) and beta(3)) - the catalytic core - and a membrane F(0) domain - the membrane proton channel (subunits c, a, 8, e, f, g, k and j). These two domains are linked by a central stalk (subunits gamma, delta, and epsilon) rotating inside the F1 region and a stationary peripheral stalk (subunits F6, b, d, and OSCP). Interacts with ATPAF2. Interacts with HRG; the interaction occurs on the surface of T-cells and alters the cell morphology when associated with concanavalin (in vitro). Interacts with PLG (angiostatin peptide); the interaction inhibits most of the angiogenic properties of angiostatin. Interacts with BLOC1S1. Interacts with BCL2L1 isoform BCL-X(L); the interaction mediates the association of BCL2L1 isoform BCL-X(L) with the mitochondrial membrane F(1)F(0) ATP synthase and enhances neurons metabolic efficiency. Interacts with CLN5 and PPT1. Interacts with S100A1; this interaction increases F1-ATPase activity. Interacts with ABCB7; this interaction allows the regulation of cellular iron homeostasis and cellular reactive oxygen species (ROS) levels in cardiomyocytes. Acetylated on lysine residues. BLOC1S1 is required for acetylation. As to expression, heart muscle (at protein level). Heart and liver.

It localises to the mitochondrion inner membrane. Its subcellular location is the cell membrane. Its function is as follows. Subunit alpha, of the mitochondrial membrane ATP synthase complex (F(1)F(0) ATP synthase or Complex V) that produces ATP from ADP in the presence of a proton gradient across the membrane which is generated by electron transport complexes of the respiratory chain. ATP synthase complex consist of a soluble F(1) head domain - the catalytic core - and a membrane F(1) domain - the membrane proton channel. These two domains are linked by a central stalk rotating inside the F(1) region and a stationary peripheral stalk. During catalysis, ATP synthesis in the catalytic domain of F(1) is coupled via a rotary mechanism of the central stalk subunits to proton translocation. In vivo, can only synthesize ATP although its ATP hydrolase activity can be activated artificially in vitro. With the catalytic subunit beta (ATP5F1B), forms the catalytic core in the F(1) domain. Subunit alpha does not bear the catalytic high-affinity ATP-binding sites. The polypeptide is ATP synthase F(1) complex subunit alpha, mitochondrial (Bos taurus (Bovine)).